Consider the following 258-residue polypeptide: Phosphoribosylaminoimidazole-succinocarboxamide synthase (258 aa).

It belongs to the SAICAR synthetase family.

It carries out the reaction 5-amino-1-(5-phospho-D-ribosyl)imidazole-4-carboxylate + L-aspartate + ATP = (2S)-2-[5-amino-1-(5-phospho-beta-D-ribosyl)imidazole-4-carboxamido]succinate + ADP + phosphate + 2 H(+). Its pathway is purine metabolism; IMP biosynthesis via de novo pathway; 5-amino-1-(5-phospho-D-ribosyl)imidazole-4-carboxamide from 5-amino-1-(5-phospho-D-ribosyl)imidazole-4-carboxylate: step 1/2. The protein is Phosphoribosylaminoimidazole-succinocarboxamide synthase of Sphingopyxis alaskensis (strain DSM 13593 / LMG 18877 / RB2256) (Sphingomonas alaskensis).